Reading from the N-terminus, the 274-residue chain is Nitrogenase iron protein (274 aa).

ATP is bound at residue 8–15 (GKGGIGKS). Cys94 lines the [4Fe-4S] cluster pocket. Arg97 carries the post-translational modification ADP-ribosylarginine; by dinitrogenase reductase ADP-ribosyltransferase. Cys131 is a binding site for [4Fe-4S] cluster.

The protein belongs to the NifH/BchL/ChlL family. As to quaternary structure, homodimer. It depends on [4Fe-4S] cluster as a cofactor. Post-translationally, the reversible ADP-ribosylation of Arg-97 inactivates the nitrogenase reductase and regulates nitrogenase activity.

The catalysed reaction is N2 + 8 reduced [2Fe-2S]-[ferredoxin] + 16 ATP + 16 H2O = H2 + 8 oxidized [2Fe-2S]-[ferredoxin] + 2 NH4(+) + 16 ADP + 16 phosphate + 6 H(+). Its function is as follows. The key enzymatic reactions in nitrogen fixation are catalyzed by the nitrogenase complex, which has 2 components: the iron protein and the molybdenum-iron protein. The chain is Nitrogenase iron protein from Prosthecochloris aestuarii (strain DSM 271 / SK 413).